A 375-amino-acid polypeptide reads, in one-letter code: Glutamate 5-kinase (375 aa).

K17 serves as a coordination point for ATP. 3 residues coordinate substrate: S58, D145, and N157. Residues 177–178 (SD) and 219–225 (TGGMVTK) contribute to the ATP site. A PUA domain is found at 281–359 (QGALTLDDGA…RELARELGPA (79 aa)).

Belongs to the glutamate 5-kinase family.

Its subcellular location is the cytoplasm. The catalysed reaction is L-glutamate + ATP = L-glutamyl 5-phosphate + ADP. Its pathway is amino-acid biosynthesis; L-proline biosynthesis; L-glutamate 5-semialdehyde from L-glutamate: step 1/2. In terms of biological role, catalyzes the transfer of a phosphate group to glutamate to form L-glutamate 5-phosphate. The chain is Glutamate 5-kinase from Streptomyces avermitilis (strain ATCC 31267 / DSM 46492 / JCM 5070 / NBRC 14893 / NCIMB 12804 / NRRL 8165 / MA-4680).